The chain runs to 300 residues: 4-hydroxy-tetrahydrodipicolinate synthase (300 aa).

T45 is a binding site for pyruvate. Y140 acts as the Proton donor/acceptor in catalysis. K169 serves as the catalytic Schiff-base intermediate with substrate. Residue I210 coordinates pyruvate.

This sequence belongs to the DapA family. As to quaternary structure, homotetramer; dimer of dimers.

Its subcellular location is the cytoplasm. It catalyses the reaction L-aspartate 4-semialdehyde + pyruvate = (2S,4S)-4-hydroxy-2,3,4,5-tetrahydrodipicolinate + H2O + H(+). It functions in the pathway amino-acid biosynthesis; L-lysine biosynthesis via DAP pathway; (S)-tetrahydrodipicolinate from L-aspartate: step 3/4. Catalyzes the condensation of (S)-aspartate-beta-semialdehyde [(S)-ASA] and pyruvate to 4-hydroxy-tetrahydrodipicolinate (HTPA). This chain is 4-hydroxy-tetrahydrodipicolinate synthase, found in Helicobacter pylori (strain G27).